Reading from the N-terminus, the 209-residue chain is HTLV-1 basic zipper factor (209 aa).

A disordered region spans residues 48-162 (DGLLSLEEES…SARKEKMQEL (115 aa)). Basic and acidic residues-rich tracts occupy residues 70-87 (APPR…AEEK) and 94-114 (REKE…EEKA). Positions 87-92 (KRKRKK) match the Nuclear localization signal 1 motif. 2 short sequence motifs (nuclear localization signal) span residues 116–120 (RRRRA) and 137–141 (RRERK). Residues 122–160 (KKAADVARRKQEEQERRERKWRQGAEKAKQHSARKEKMQ) show a composition bias toward basic and acidic residues.

Belongs to the HTLV-1 HBZ protein family. In terms of assembly, interacts with host ATF4; this interaction inhibits viral RNA transcriptional activation by preventing ATF4 binding to Tax-responsive elements. Interacts with host CREB1; this interaction inhibits host CREB1 transcriptional activity. Interacts with host JUN, JUNB and JUND. Interacts with host EP300.

The protein localises to the host nucleus. Contributes to the regulation of viral RNA transcription by interacting with host proteins involved in transcriptional activation such as ATF4, or CREB1, and by inhibiting their activity. Additionally, HBZ suppresses host NF-kappa-B-driven transcription mediated by host RELA as well as transcription of some classical NF-kappa-B target genes, including IL8, IL2RA, IRF4, VCAM1, and VEGFA. The polypeptide is HTLV-1 basic zipper factor (HBZ) (Homo sapiens (Human)).